Here is a 376-residue protein sequence, read N- to C-terminus: Alpha-2,8-sialyltransferase 8E (376 aa).

Over 1–17 (MRYADPSANRDLLGNRT) the chain is Cytoplasmic. Residues 18–38 (LLFIFICAFALVTLLQQILYG) form a helical; Signal-anchor for type II membrane protein membrane-spanning segment. The Lumenal portion of the chain corresponds to 39 to 376 (RNYIKRYFEF…RVHTGTCSCC (338 aa)). Asn56 and Asn96 each carry an N-linked (GlcNAc...) asparagine glycan. Intrachain disulfides connect Cys164–Cys313 and Cys178–Cys373. Substrate-binding positions include Asn192 and 214-216 (NPS). N-linked (GlcNAc...) asparagine glycosylation is found at Asn241 and Asn284. Substrate is bound at residue 300-302 (STG). The active-site Proton donor/acceptor is His348.

It belongs to the glycosyltransferase 29 family.

The protein localises to the golgi apparatus membrane. The enzyme catalyses a ganglioside GQ1c (d18:1(4E)) + CMP-N-acetyl-beta-neuraminate = a ganglioside GP1c (d18:1(4E)) + CMP + H(+). The protein operates within protein modification; protein glycosylation. Its function is as follows. Involved in the synthesis of gangliosides GD1c, GT1a, GQ1b, GP1c and GT3 from GD1a, GT1b, GM1b and GD3 respectively. The sequence is that of Alpha-2,8-sialyltransferase 8E (ST8SIA5) from Pan troglodytes (Chimpanzee).